Consider the following 371-residue polypeptide: Histidinol-phosphate aminotransferase (371 aa).

Lys-221 carries the post-translational modification N6-(pyridoxal phosphate)lysine.

This sequence belongs to the class-II pyridoxal-phosphate-dependent aminotransferase family. Histidinol-phosphate aminotransferase subfamily. Homodimer. Requires pyridoxal 5'-phosphate as cofactor.

It carries out the reaction L-histidinol phosphate + 2-oxoglutarate = 3-(imidazol-4-yl)-2-oxopropyl phosphate + L-glutamate. It functions in the pathway amino-acid biosynthesis; L-histidine biosynthesis; L-histidine from 5-phospho-alpha-D-ribose 1-diphosphate: step 7/9. The polypeptide is Histidinol-phosphate aminotransferase (Pseudoalteromonas atlantica (strain T6c / ATCC BAA-1087)).